The sequence spans 379 residues: Succinyl-diaminopimelate desuccinylase (379 aa).

His70 provides a ligand contact to Zn(2+). Asp72 is an active-site residue. Zn(2+) is bound at residue Asp103. Glu137 (proton acceptor) is an active-site residue. The Zn(2+) site is built by Glu138, Glu166, and His352.

Belongs to the peptidase M20A family. DapE subfamily. Homodimer. Requires Zn(2+) as cofactor. Co(2+) is required as a cofactor.

It carries out the reaction N-succinyl-(2S,6S)-2,6-diaminopimelate + H2O = (2S,6S)-2,6-diaminopimelate + succinate. It participates in amino-acid biosynthesis; L-lysine biosynthesis via DAP pathway; LL-2,6-diaminopimelate from (S)-tetrahydrodipicolinate (succinylase route): step 3/3. Functionally, catalyzes the hydrolysis of N-succinyl-L,L-diaminopimelic acid (SDAP), forming succinate and LL-2,6-diaminopimelate (DAP), an intermediate involved in the bacterial biosynthesis of lysine and meso-diaminopimelic acid, an essential component of bacterial cell walls. This chain is Succinyl-diaminopimelate desuccinylase, found in Burkholderia orbicola (strain MC0-3).